A 462-amino-acid polypeptide reads, in one-letter code: Probable serine/threonine-protein kinase DDB_G0286841 (462 aa).

Residues 64–358 (FNFLKVISKG…VDEVKCHPFF (295 aa)) enclose the Protein kinase domain. ATP-binding positions include 70 to 78 (ISKGGFGKV) and K93. D188 functions as the Proton acceptor in the catalytic mechanism. The AGC-kinase C-terminal domain maps to 359–462 (SEINWKIYED…LFIDFDFPTY (104 aa)). The segment covering 414-439 (NIYKNNNNNNNNNNNNNNNNNNNNNN) has biased composition (low complexity). The interval 414–447 (NIYKNNNNNNNNNNNNNNNNNNNNNNDDNDDENN) is disordered.

Belongs to the protein kinase superfamily. AGC Ser/Thr protein kinase family.

It carries out the reaction L-seryl-[protein] + ATP = O-phospho-L-seryl-[protein] + ADP + H(+). The enzyme catalyses L-threonyl-[protein] + ATP = O-phospho-L-threonyl-[protein] + ADP + H(+). This Dictyostelium discoideum (Social amoeba) protein is Probable serine/threonine-protein kinase DDB_G0286841.